Reading from the N-terminus, the 517-residue chain is Probable anion transporter 6, chloroplastic (517 aa).

A disordered region spans residues 51–73 (TERVRESKKLPPKDPIEDPKPQL). Residues 52–70 (ERVRESKKLPPKDPIEDPK) are compositionally biased toward basic and acidic residues. 10 helical membrane passes run 130–150 (FGWSSSVAGLVQSSFFWGYAL), 170–190 (IGVFTWSFATALVPLLAGFMP), 229–249 (FVFGGLSLGSVMGLLLAPPII), 255–275 (ESVFYLFGLLGVGWFVGFQFL), 312–332 (SFFQSPAVWAMIYTHFCGSWG), 352–372 (LTEAAWVSILPPLASIVVTSL), 397–417 (IAFVAPAICMTLSSVDIGLPP), 420–440 (IVGILTAGLALSSFALSGLYC), 452–472 (ILLGITNTVGAVPGIVGVALT), and 484–504 (MSLFVPSIFFYLTGTVVWLAF).

It belongs to the major facilitator superfamily. Sodium/anion cotransporter (TC 2.A.1.14) family. Expressed in leaf veins and sepals.

It localises to the plastid. The protein resides in the chloroplast membrane. Inorganic phosphate and probable anion transporter. The polypeptide is Probable anion transporter 6, chloroplastic (ANTR6) (Arabidopsis thaliana (Mouse-ear cress)).